The primary structure comprises 954 residues: Valine--tRNA ligase (954 aa).

The 'HIGH' region signature appears at 48–58; that stretch reads PNVTGSLHMGH. The 'KMSKS' region motif lies at 560 to 564; that stretch reads KMSKS. K563 is an ATP binding site. Residues 883–953 are a coiled coil; the sequence is AGFINKEAEL…LKQQYLAIEA (71 aa).

Belongs to the class-I aminoacyl-tRNA synthetase family. ValS type 1 subfamily. Monomer.

It is found in the cytoplasm. The catalysed reaction is tRNA(Val) + L-valine + ATP = L-valyl-tRNA(Val) + AMP + diphosphate. Catalyzes the attachment of valine to tRNA(Val). As ValRS can inadvertently accommodate and process structurally similar amino acids such as threonine, to avoid such errors, it has a 'posttransfer' editing activity that hydrolyzes mischarged Thr-tRNA(Val) in a tRNA-dependent manner. The protein is Valine--tRNA ligase of Pasteurella multocida (strain Pm70).